The primary structure comprises 63 residues: DNA-directed RNA polymerase 7 kDa subunit (63 aa).

The protein belongs to the poxviridae DNA-directed RNA polymerase 7 kDa subunit family. In terms of assembly, the DNA-dependent RNA polymerase used for intermediate and late genes expression consists of eight subunits 147 kDa, 133 kDa, 35 kDa, 30 kDa, 22 kDa, 19 kDa, 18 kDa and 7 kDa totalling more than 500 kDa in mass. The same holoenzyme, with the addition of the transcription-specificity factor RAP94, is used for early gene expression.

The protein resides in the virion. The catalysed reaction is RNA(n) + a ribonucleoside 5'-triphosphate = RNA(n+1) + diphosphate. Functionally, part of the DNA-dependent RNA polymerase which catalyzes the transcription of viral DNA into RNA using the four ribonucleoside triphosphates as substrates. Responsible for the transcription of early, intermediate and late genes. DNA-dependent RNA polymerase associates with the early transcription factor (ETF) thereby allowing the early genes transcription. Late transcription, and probably also intermediate transcription, require newly synthesized RNA polymerase. This is DNA-directed RNA polymerase 7 kDa subunit (RPO7) from Molluscum contagiosum virus subtype 1 (MOCV).